The sequence spans 1002 residues: MWRYISKHAYSRKFRNSHDSALLGFSQYSSSFGKTRPLQCLCEESTTHPNLGLSQNSIFSRISRKVRHLEGICEESSKNPHLGLSQNSTFSSVKGDFRICGKRGSGSLGRLRSYGSAAEAIVSTSEEDIDEIQELIEEMDKENEALKANLQPKQPKTIGGMGVGKYNFLRRRQIKVETEAWEEAAKEYQELLMDMCEQKLAPNLPYMKSLFLGWFEPLRDAIAAEQKLCDEGKNRGAYAPFFDQLPAEMMAVITMHKLMGLLMTGGGTGSARVVQAASYIGEAIEHEARIHRFLEKTKKSNALSGDLEETPGDMMKERERLRKKVKILMKKQKLRQVRKIVKQQDDEKPWGQDNLVKVGCRLIQILMETAYIQPPNDQLDDGPPDIRPAFVHTLKTVETMKGSRRYGVIQCDPLVRKGLDKTARHMVIPYMPMLVPPQSWLGYDKGGYLFLPSYIMRTHGAKQQREAVKRVPKKQLEPVFQALDTLGNTKWRVNRKVLGIVDRIWASGGRLADLVDREDVPLPEAPDTEDEAEIRKWKWKVKGVKKENCERHSQRCDIELKLAVARKMKDEDGFYYPHNLDFRGRAYPMHPYLNHLGSDLCRGILEFAEGRPLGTSGLRWLKIHLANVYGGGVDKLSYEGRVAFSENHLEDIFDSAERPLEGKRWWLGAEDPFQCLATCINIAEALRSPSPETAISYMPIHQDGSCNGLQHYAALGRDKLGAAAVNLVAGDKPADVYSGIAARVLDIMKRDAAKDPANDPNVMRARLLINQVDRKLVKQTVMTSVYGVTYIGARDQIKKRLKERGVIEDDNELFAAACYAAKTTLTALGEMFEAARSIMSWLGDCAKIIAMENHPVRWTTPLGLPVVQPYRKLGRHLIKTSLQILTLQRETDKVMVKRQRTAFPPNFVHSLDGSHMMMTAIACKESGLSFAGVHDSYWTHACDVDQMNKILREKFVELYDAPILENLLESFQQSFPDLQFPPLPERGDFDLREVLESPYFFN.

The transit peptide at 1–21 directs the protein to the mitochondrion; that stretch reads MWRYISKHAYSRKFRNSHDSA. Catalysis depends on residues Asp703, Lys778, and Asp935.

This sequence belongs to the phage and mitochondrial RNA polymerase family.

It is found in the mitochondrion. The catalysed reaction is RNA(n) + a ribonucleoside 5'-triphosphate = RNA(n+1) + diphosphate. Its function is as follows. DNA-dependent RNA polymerase catalyzes the transcription of DNA into RNA using the four ribonucleoside triphosphates as substrates. This is DNA-directed RNA polymerase 1B, mitochondrial (RPOT1-TOM) from Nicotiana tabacum (Common tobacco).